The sequence spans 238 residues: CD63 antigen (238 aa).

Over 2 to 11 the chain is Cytoplasmic; the sequence is AVEGGMKCVK. A helical membrane pass occupies residues 12–32; sequence FLLYVLLLAFCACAVGLIAVG. At 33–51 the chain is on the extracellular side; that stretch reads VGAQLVLSQTIIQGATPGS. Residues 52–72 form a helical membrane-spanning segment; it reads LLPVVIIAVGVFLFLVAFVGC. At 73 to 81 the chain is on the cytoplasmic side; sequence CGACKENYC. A helical transmembrane segment spans residues 82–102; the sequence is LMITFAIFLSLIMLVEVAAAI. At 103–203 the chain is on the extracellular side; that stretch reads AGYVFRDKVM…KIGGWLRKNV (101 aa). N-linked (GlcNAc...) asparagine glycans are attached at residues N130, N150, and N172. A helical membrane pass occupies residues 204–224; the sequence is LVVAAAALGIAFVEVLGIVFA. The Cytoplasmic portion of the chain corresponds to 225 to 238; sequence CCLVKSIRSGYEVM. A Lysosomal targeting motif motif is present at residues 234-238; that stretch reads GYEVM.

This sequence belongs to the tetraspanin (TM4SF) family. Interacts with TIMP1 and ITGB1 and recruits TIMP1 to ITGB1. Interacts with CD9. Identified in a complex with CD9 and ITGB3. Interacts with PMEL. Interacts with KDR/VEGFR2; identified in a complex with ITGB1 and KDR/VEGFR2 and is required to recruit KDR to ITGB1 complexes. Interacts with SYT7. In terms of processing, palmitoylated at a low, basal level in unstimulated platelets. The level of palmitoylation increases when platelets are activated by thrombin (in vitro). In terms of tissue distribution, detected in platelets (at protein level). Dysplastic nevi, radial growth phase primary melanomas, hematopoietic cells, tissue macrophages.

It is found in the cell membrane. Its subcellular location is the lysosome membrane. It localises to the late endosome membrane. The protein resides in the endosome. The protein localises to the multivesicular body. It is found in the melanosome. Its subcellular location is the secreted. It localises to the extracellular exosome. The protein resides in the cell surface. Its function is as follows. Functions as a cell surface receptor for TIMP1 and plays a role in the activation of cellular signaling cascades. Plays a role in the activation of ITGB1 and integrin signaling, leading to the activation of AKT, FAK/PTK2 and MAP kinases. Promotes cell survival, reorganization of the actin cytoskeleton, cell adhesion, spreading and migration, via its role in the activation of AKT and FAK/PTK2. Plays a role in VEGFA signaling via its role in regulating the internalization of KDR/VEGFR2. Plays a role in intracellular vesicular transport processes, and is required for normal trafficking of the PMEL luminal domain that is essential for the development and maturation of melanocytes. Plays a role in the adhesion of leukocytes onto endothelial cells via its role in the regulation of SELP trafficking. May play a role in mast cell degranulation in response to Ms4a2/FceRI stimulation, but not in mast cell degranulation in response to other stimuli. The chain is CD63 antigen (CD63) from Homo sapiens (Human).